The chain runs to 1475 residues: Sex-determining transformer protein 2 (1475 aa).

The signal sequence occupies residues 1 to 31; it reads MKLKYNKLLVSVVIVTFVTFGLLLAECFGKS. The next 11 membrane-spanning stretches (helical) occupy residues 446–466, 474–494, 496–516, 589–609, 737–757, 902–922, 928–948, 952–972, 979–999, 1034–1054, and 1060–1080; these read TIHF…IFVW, AFMF…VCST, GVIV…LANL, WGCT…FIDS, GVIL…LLFI, AVGV…LFAF, AGIF…TPTI, FLFS…VHLF, IYTN…FCAL, IAQF…ICSI, and IFFV…FNSI. Positions 1133 to 1273 are interaction with fem-3; it reads EFSIKRSSPP…RERNLMNKRS (141 aa). Disordered stretches follow at residues 1142–1194 and 1267–1330; these read PCRY…GDNT and NLMN…VDEP. Positions 1178–1188 are enriched in basic residues; it reads RSPKTGNKRVR. The span at 1276–1310 shows a compositional bias: basic and acidic residues; that stretch reads QRRESRNIEKMKKSQENLDKEKSEEKISESKKNQD. The tract at residues 1392–1413 is MX regulatory domain; required for tra-1 binding; it reads CEDIYWTHRTGQLPPGLQVPRR. Residues 1424–1475 form a disordered region; the sequence is TPPPEDLNWVPPAESPPIPIPQQAFDLLEERRRNHREQQDEAREGDLSDPEV. Residues 1451–1469 are compositionally biased toward basic and acidic residues; it reads LEERRRNHREQQDEAREGD.

In terms of assembly, interacts with tra-1 and fem-3. In terms of processing, undergoes cleavage by tra-3 to produce a feminizing carboxy-terminal isoform Tra-2B. In terms of tissue distribution, somatic and germline tissues. Isoform Tra-2B is specific to oocytes.

It localises to the membrane. In terms of biological role, plays a major role in controlling sexual cell fates. Promotes female development in XX animals where it sequesters one or more of the FEM proteins to the membrane thereby freeing the tra-1 protein (a putative transcription factor) to enter the nucleus and promote female development. In XO animals it acts as a receptor for her-1 which prevents it from binding to FEM proteins thereby repressing the activity of tra-1. Negatively regulates male development when bound to fem-3 and is required together with tra-1 for promoting spermatogenesis. Also required for feminizing tra-3 activity. The chain is Sex-determining transformer protein 2 (tra-2) from Caenorhabditis elegans.